The sequence spans 151 residues: UPF0208 membrane protein YfbV (151 aa).

A run of 2 helical transmembrane segments spans residues 46–65 and 69–91; these read YAIR…QIAL and LGPA…WWLG.

Belongs to the UPF0208 family.

The protein resides in the cell inner membrane. This Shigella boydii serotype 18 (strain CDC 3083-94 / BS512) protein is UPF0208 membrane protein YfbV.